The primary structure comprises 721 residues: mRNA (2'-O-methyladenosine-N(6)-)-methyltransferase (721 aa).

Polar residues-rich tracts occupy residues Met1–Lys10 and Pro19–Pro36. Positions Met1–Ile37 are disordered. The 35-residue stretch at Glu43–Leu77 folds into the WW domain. Residues Pro93 to Pro170 are disordered. Low complexity predominate over residues Ile132 to Pro148. Positions 239 and 269 each coordinate substrate. An S-adenosyl-L-methionine-binding site is contributed by Asn558–Phe561. Substrate is bound by residues Glu563 and Trp593–Pro597. Phe619–His621 lines the S-adenosyl-L-methionine pocket. Low complexity predominate over residues Ser675–Ser686. The interval Ser675–Thr721 is disordered. The segment covering Ala702–Thr721 has biased composition (polar residues).

It belongs to the CAPAM family.

Its subcellular location is the nucleus. It catalyses the reaction a 5'-end (N(7)-methyl 5'-triphosphoguanosine)-(2'-O-methyladenosine) in mRNA + S-adenosyl-L-methionine = a 5'-end (N(7)-methyl 5'-triphosphoguanosine)-(N(6),2'-O-dimethyladenosine) in mRNA + S-adenosyl-L-homocysteine + H(+). Its activity is regulated as follows. Cap-specific adenosine methyltransferase activity is inhibited by zinc. Its function is as follows. Cap-specific adenosine methyltransferase that catalyzes formation of N(6),2'-O-dimethyladenosine cap (m6A(m)) by methylating the adenosine at the second transcribed position of capped mRNAs. The sequence is that of mRNA (2'-O-methyladenosine-N(6)-)-methyltransferase (pcif1) from Danio rerio (Zebrafish).